A 1137-amino-acid polypeptide reads, in one-letter code: DENN domain-containing protein 2B (1137 aa).

Polar residues predominate over residues 1–12 (MTMTANKNSSIT). Positions 1–99 (MTMTANKNSS…PTCPFKTASF (99 aa)) are disordered. A phosphoserine mark is found at serine 30 and serine 32. A compositionally biased stretch (pro residues) spans 32–43 (SPPPVLSPPRSP). Residues 49–64 (DSETSACRYPSHSSSR) are compositionally biased toward polar residues. A compositionally biased stretch (pro residues) spans 73–92 (PAPSPQNPQDPSPDTSPPTC). At threonine 231 the chain carries Phosphothreonine. Serine 233 carries the phosphoserine modification. Residues 293-573 (KEQPGRGLPQ…HRLPRLPKRH (281 aa)) are disordered. The span at 324-348 (EEPAGGASVSAGSRAVGVAGVAGEA) shows a compositional bias: low complexity. Threonine 364 is subject to Phosphothreonine. At serine 368 the chain carries Phosphoserine. Positions 368–380 (SPSSQRLPSKSSL) are enriched in low complexity. Residues 392 to 402 (RTFEYEADKNP) show a composition bias toward basic and acidic residues. The interaction with ABL1 stretch occupies residues 401–447 (NPKSKPSNGLPPSPTPAAPPPLPSTPAPPVTRRPKKDMRGHRKSQSR). Residues 409–431 (GLPPSPTPAAPPPLPSTPAPPVT) are compositionally biased toward pro residues. Residues 432 to 446 (RRPKKDMRGHRKSQS) are compositionally biased toward basic residues. Over residues 456-481 (SSLQSLYPSSPTENGTENQPKFGSKS) the composition is skewed to polar residues. A Phosphothreonine modification is found at threonine 482. Residues 495–508 (LPKENPYEDVDLKS) are compositionally biased toward basic and acidic residues. Composition is skewed to polar residues over residues 514–524 (KSQQLSENSLD) and 539–558 (SPPT…SGNW). The residue at position 545 (serine 545) is a Phosphoserine. The segment covering 562 to 573 (KSHRLPRLPKRH) has biased composition (basic residues). Residues serine 574 and serine 622 each carry the phosphoserine modification. The interval 641–661 (IETASLRDENSESESDSDDRF) is disordered. The 149-residue stretch at 698 to 846 (EYFVVVSLKK…PFPAPGKTIK (149 aa)) folds into the uDENN domain. A cDENN domain is found at 868-1001 (RLEHVDFECL…LQAALEQALE (134 aa)). In terms of domain architecture, dDENN spans 1003–1096 (KNELISQDSD…QDRELRKCRA (94 aa)).

In terms of assembly, interacts with ITSN1 and GRB2. Isoform 1 interacts with the SH3 domain of ABL1. In terms of processing, phosphorylated. Phosphorylation decreases ITSN1 binding. In terms of tissue distribution, widely expressed with the exception of peripheral blood lymphocytes. Isoform 1 is expressed in several epithelial and fibroblast (including tumorigenic) but absent in lymphoid cell lines (at protein level). Isoform 3 is expressed in primary cell or weakly tumorigenic but not in tumorigenic cell lines (at protein level).

It is found in the cytoplasm. Its subcellular location is the cell cortex. The protein localises to the cell membrane. It localises to the recycling endosome. Functionally, may be involved in cytoskeletal organization and tumorogenicity. Seems to be involved in a signaling transduction pathway leading to activation of MAPK1/ERK2. Plays a role in EGFR trafficking from recycling endosomes back to the cell membrane. Its function is as follows. Guanine nucleotide exchange factor (GEF) which may activate RAB9A and RAB9B. Promotes the exchange of GDP to GTP, converting inactive GDP-bound Rab proteins into their active GTP-bound form. May block ERK2 activation stimulated by ABL1. May alter cell morphology and cell growth. The protein is DENN domain-containing protein 2B of Homo sapiens (Human).